The sequence spans 368 residues: Deoxyhypusine synthase (368 aa).

NAD(+) contacts are provided by residues 104–108 (SNLVS), 130–132 (TTG), glutamate 136, and aspartate 237. 135–136 (EE) is a binding site for spermidine. Aspartate 242 provides a ligand contact to spermidine. Residue glycine 284 participates in NAD(+) binding. Histidine 289 is a spermidine binding site. 309-310 (TG) is an NAD(+) binding site. Residues 315 to 317 (GSD) and 324 to 330 (EAVSWGK) contribute to the spermidine site. Catalysis depends on lysine 330, which acts as the Nucleophile. 343-344 (DA) is an NAD(+) binding site.

It belongs to the deoxyhypusine synthase family. NAD(+) serves as cofactor.

The catalysed reaction is [eIF5A protein]-L-lysine + spermidine = [eIF5A protein]-deoxyhypusine + propane-1,3-diamine. Its pathway is protein modification; eIF5A hypusination. Catalyzes the NAD-dependent oxidative cleavage of spermidine and the subsequent transfer of the butylamine moiety of spermidine to the epsilon-amino group of a specific lysine residue of the eIF-5A precursor protein to form the intermediate deoxyhypusine residue. Also able to produce homospermidine from putrescine. The protein is Deoxyhypusine synthase (DHS) of Arabidopsis thaliana (Mouse-ear cress).